The chain runs to 482 residues: Ras GTPase-activating protein-binding protein 2 (482 aa).

The region spanning 11-133 is the NTF2 domain; that stretch reads VGREFVRQYY…FYVHNDMFRY (123 aa). Residues 140–158 are compositionally biased toward acidic residues; that stretch reads DSEPELDEESEDEVEEEQE. Disordered stretches follow at residues 140–170 and 187–318; these read DSEP…VQEN and EPLE…EQND. Phosphoserine occurs at positions 141, 149, and 225. Residues 142–220 form an acidic disordered region region; sequence EPELDEESED…PQVEEKHLEE (79 aa). Residues 191–225 show a composition bias toward basic and acidic residues; the sequence is ESSHEPEPEPESETKTEELKPQVEEKHLEELEEKS. Threonine 227 bears the Phosphothreonine mark. Polar residues predominate over residues 247-264; sequence ASVTSKNLPPSGTVSSSG. A Glycyl lysine isopeptide (Lys-Gly) (interchain with G-Cter in SUMO2) cross-link involves residue lysine 281. Basic and acidic residues predominate over residues 290–300; that stretch reads RVREQRPRERP. The 79-residue stretch at 331-409 folds into the RRM domain; that stretch reads HQLFVGNLPH…VRLNVEEKKT (79 aa). N6-succinyllysine is present on lysine 392. The interval 404–476 is RG-rich region; that stretch reads VEEKKTRAAR…GRGTGQMEGR (73 aa). Over residues 408-432 the composition is skewed to basic and acidic residues; the sequence is KTRAARERETRGGGDDRRDIRRNDR. The disordered stretch occupies residues 408–482; sequence KTRAARERET…MEGRFTGQRR (75 aa). A compositionally biased stretch (gly residues) spans 433-445; that stretch reads GPGGPRGIVGGGM. Omega-N-methylarginine is present on arginine 457. The residue at position 466 (serine 466) is a Phosphoserine. Arginine 468 is subject to Omega-N-methylarginine.

Forms homooligomers. Forms heterodimers with G3BP1. Interacts with NFKBIA (via N-terminus). Interacts (via NTF2 domain) with USP10; inhibiting stress granule formation. Interacts (via NTF2 domain) with CAPRIN1; promoting stress granule formation. Associates (via RG-rich region) with 40S ribosome subunits. Interacts with PABPC1.

Its subcellular location is the cytoplasm. It localises to the stress granule. Under physiological conditions, G3BP2 adopts a compact state that is stabilized by intramolecular interactions between the RG-rich and the acidic regions that inhibit phase separation. Upon stress, polysomes disassemble and mRNAs are released in an unfolded protein-free state. Binding of unfolded mRNA to G3BP2 outcompetes the intramolecular interactions and RNA-bound G3BP2 adopts an expanded conformation in which the RG-rich region becomes exposed to engage in protein-protein and protein-RNA interactions, allowing physical cross-linking of RNA molecules to form protein-RNA condensates, leading to liquid-liquid phase separation (LLPS). Scaffold protein that plays an essential role in cytoplasmic stress granule formation which acts as a platform for antiviral signaling. Plays an essential role in stress granule formation. Stress granules are membraneless compartments that store mRNAs and proteins, such as stalled translation pre-initiation complexes, in response to stress. Promotes formation of stress granules phase-separated membraneless compartment by undergoing liquid-liquid phase separation (LLPS) upon unfolded RNA-binding: functions as a molecular switch that triggers RNA-dependent LLPS in response to a rise in intracellular free RNA concentrations. This is Ras GTPase-activating protein-binding protein 2 (G3bp2) from Mus musculus (Mouse).